The chain runs to 288 residues: MFGNLKKKLSSAIQEGLVISENLQQQYRQRVSSGNSGSSQASGITTPISPLGLNESLSSSRSSSLSLSAPFQLTDGVPSHLNVAAGCSLLAKYEDDWQQIHGANEKNAEKAAQIANQISGIQDQASHQHRIMSELNSSLAGIPTLIAQLQNSSQVLNSLEEMGKQLEIELEKLEDLREECELQEFILEQQFQLSRHKQKKLNELEQYRQQIAQKHQSKIKDQEQTLLKLQRERQAVFDDAFREDMEEYKQRGQLTKIQTTSNKLALEEVVLEANEVETKDALEQFLNG.

The stretch at 147-239 (AQLQNSSQVL…QRERQAVFDD (93 aa)) forms a coiled coil.

This sequence belongs to the dysbindin family. Component of the biogenesis of lysosome-related organelles complex-1 (BLOC-1) composed of Blos1, Blos2, Blos3, Blos4, Dysb, Muted, Pldn and Snapin. Interacts with Pldn and Snapin.

Functionally, component of the biogenesis of lysosome-related organelles complex-1 (BLOC-1) involved in pigment granule biogenesis and membrane trafficking in synapses. In response to high synaptic activity at neuromuscular junctions, stabilizes Pldn protein levels and, together with Pldn, plays a role in promoting efficient synaptic vesicle recycling and re-formation through early endosomes. This chain is Dysbindin protein homolog, found in Drosophila melanogaster (Fruit fly).